The chain runs to 45 residues: Large ribosomal subunit protein bL34 (45 aa).

This sequence belongs to the bacterial ribosomal protein bL34 family.

In Opitutus terrae (strain DSM 11246 / JCM 15787 / PB90-1), this protein is Large ribosomal subunit protein bL34.